The primary structure comprises 107 residues: Iron-binding protein IscA (107 aa).

3 residues coordinate Fe cation: Cys-35, Cys-99, and Cys-101.

This sequence belongs to the HesB/IscA family. Homodimer; may form tetramers and higher multimers. Fe cation is required as a cofactor.

Functionally, is able to transfer iron-sulfur clusters to apo-ferredoxin. Multiple cycles of [2Fe2S] cluster formation and transfer are observed, suggesting that IscA acts catalytically. Recruits intracellular free iron so as to provide iron for the assembly of transient iron-sulfur cluster in IscU in the presence of IscS, L-cysteine and the thioredoxin reductase system TrxA/TrxB. This Cronobacter sakazakii (strain ATCC BAA-894) (Enterobacter sakazakii) protein is Iron-binding protein IscA.